The chain runs to 114 residues: Probable 4-amino-4-deoxy-L-arabinose-phosphoundecaprenol flippase subunit ArnE (114 aa).

Transmembrane regions (helical) follow at residues 41–61 (PWLI…IYLL), 64–84 (LPLS…LIGS), and 94–114 (YHNW…GGLL). The 60-residue stretch at 53-112 (GMLLWIYLLQRLPLSMAYPMLSINLVLVLIGSRLFFHEQISYHNWLGAGAIIIGALLLGG) folds into the EamA domain.

Belongs to the ArnE family. As to quaternary structure, heterodimer of ArnE and ArnF.

It localises to the cell inner membrane. It participates in bacterial outer membrane biogenesis; lipopolysaccharide biosynthesis. Its function is as follows. Translocates 4-amino-4-deoxy-L-arabinose-phosphoundecaprenol (alpha-L-Ara4N-phosphoundecaprenol) from the cytoplasmic to the periplasmic side of the inner membrane. This is Probable 4-amino-4-deoxy-L-arabinose-phosphoundecaprenol flippase subunit ArnE from Aeromonas salmonicida (strain A449).